Here is a 328-residue protein sequence, read N- to C-terminus: Beta-ketoacyl-[acyl-carrier-protein] synthase III (328 aa).

Residues Cys113 and His252 contribute to the active site. Positions Gln253 to Arg257 are ACP-binding. The active site involves Asn282.

It belongs to the thiolase-like superfamily. FabH family. Homodimer.

Its subcellular location is the cytoplasm. The enzyme catalyses malonyl-[ACP] + acetyl-CoA + H(+) = 3-oxobutanoyl-[ACP] + CO2 + CoA. Its pathway is lipid metabolism; fatty acid biosynthesis. Catalyzes the condensation reaction of fatty acid synthesis by the addition to an acyl acceptor of two carbons from malonyl-ACP. Catalyzes the first condensation reaction which initiates fatty acid synthesis and may therefore play a role in governing the total rate of fatty acid production. Possesses both acetoacetyl-ACP synthase and acetyl transacylase activities. Its substrate specificity determines the biosynthesis of branched-chain and/or straight-chain of fatty acids. This Campylobacter fetus subsp. fetus (strain 82-40) protein is Beta-ketoacyl-[acyl-carrier-protein] synthase III.